The following is a 322-amino-acid chain: ATP-dependent 6-phosphofructokinase 1 (322 aa).

Glycine 11 serves as a coordination point for ATP. 21-25 (RAVVR) lines the ADP pocket. Residues 72 to 73 (RS) and 102 to 105 (GDGT) each bind ATP. A Mg(2+)-binding site is contributed by aspartate 103. Residue 126–128 (TID) coordinates substrate. Residue aspartate 128 is the Proton acceptor of the active site. Arginine 155 serves as a coordination point for ADP. Substrate contacts are provided by residues arginine 163 and 170–172 (MGR). ADP is bound by residues 186 to 188 (GAE), arginine 212, and 214 to 216 (KKS). Substrate is bound by residues glutamate 223, arginine 246, and 252–255 (HIQR).

This sequence belongs to the phosphofructokinase type A (PFKA) family. ATP-dependent PFK group I subfamily. Prokaryotic clade 'B1' sub-subfamily. In terms of assembly, homotetramer. Mg(2+) serves as cofactor.

The protein resides in the cytoplasm. The catalysed reaction is beta-D-fructose 6-phosphate + ATP = beta-D-fructose 1,6-bisphosphate + ADP + H(+). The protein operates within carbohydrate degradation; glycolysis; D-glyceraldehyde 3-phosphate and glycerone phosphate from D-glucose: step 3/4. Allosterically activated by ADP and other diphosphonucleosides. Allosterically inhibited by phosphoenolpyruvate which induces the dissociation of the active tetramer into an inactive two-subunit forms. In terms of biological role, catalyzes the phosphorylation of D-fructose 6-phosphate to fructose 1,6-bisphosphate by ATP, the first committing step of glycolysis. This is ATP-dependent 6-phosphofructokinase 1 from Thermus thermophilus (strain ATCC 27634 / DSM 579 / HB8).